The following is a 462-amino-acid chain: ATP synthase subunit beta (462 aa).

151 to 158 is an ATP binding site; it reads GGAGVGKT.

Belongs to the ATPase alpha/beta chains family. In terms of assembly, F-type ATPases have 2 components, CF(1) - the catalytic core - and CF(0) - the membrane proton channel. CF(1) has five subunits: alpha(3), beta(3), gamma(1), delta(1), epsilon(1). CF(0) has four main subunits: a(1), b(1), b'(1) and c(9-12).

It is found in the cell inner membrane. It catalyses the reaction ATP + H2O + 4 H(+)(in) = ADP + phosphate + 5 H(+)(out). Produces ATP from ADP in the presence of a proton gradient across the membrane. The catalytic sites are hosted primarily by the beta subunits. The polypeptide is ATP synthase subunit beta (Chlorobium phaeobacteroides (strain DSM 266 / SMG 266 / 2430)).